The sequence spans 192 residues: Pyridoxal 5'-phosphate synthase subunit PdxT (192 aa).

Residue 53–55 coordinates L-glutamine; sequence GES. Residue cysteine 82 is the Nucleophile of the active site. L-glutamine is bound by residues arginine 108 and 134–135; that span reads IR. Catalysis depends on charge relay system residues histidine 170 and glutamate 172.

This sequence belongs to the glutaminase PdxT/SNO family. As to quaternary structure, in the presence of PdxS, forms a dodecamer of heterodimers. Only shows activity in the heterodimer.

It carries out the reaction aldehydo-D-ribose 5-phosphate + D-glyceraldehyde 3-phosphate + L-glutamine = pyridoxal 5'-phosphate + L-glutamate + phosphate + 3 H2O + H(+). The enzyme catalyses L-glutamine + H2O = L-glutamate + NH4(+). It participates in cofactor biosynthesis; pyridoxal 5'-phosphate biosynthesis. Functionally, catalyzes the hydrolysis of glutamine to glutamate and ammonia as part of the biosynthesis of pyridoxal 5'-phosphate. The resulting ammonia molecule is channeled to the active site of PdxS. The chain is Pyridoxal 5'-phosphate synthase subunit PdxT from Methanothermobacter thermautotrophicus (strain ATCC 29096 / DSM 1053 / JCM 10044 / NBRC 100330 / Delta H) (Methanobacterium thermoautotrophicum).